The chain runs to 347 residues: Autoinducer 2 import system permease protein LsrC (347 aa).

Transmembrane regions (helical) follow at residues 14 to 34, 39 to 59, 72 to 92, 93 to 113, 115 to 135, 155 to 175, 213 to 233, 249 to 269, and 284 to 304; these read LLAI…YLSV, MVFS…MVML, GMCA…PVAC, LATL…VAWL, IPAI…MLLW, VFLG…LMAW, LNGG…GFIP, VLGG…ILGA, and IPAW…LVFD.

It belongs to the binding-protein-dependent transport system permease family. AraH/RbsC subfamily. In terms of assembly, the complex is composed of two ATP-binding proteins (LsrA), two transmembrane proteins (LsrC and LsrD) and a solute-binding protein (LsrB).

The protein resides in the cell inner membrane. Its function is as follows. Part of the ABC transporter complex LsrABCD involved in autoinducer 2 (AI-2) import. Probably responsible for the translocation of the substrate across the membrane. The polypeptide is Autoinducer 2 import system permease protein LsrC (lsrC) (Salmonella typhi).